A 606-amino-acid chain; its full sequence is Threonine--tRNA ligase (606 aa).

The tract at residues 212 to 503 (DHRKLGVEMK…LLEHTAGELP (292 aa)) is catalytic. C304, H355, and H480 together coordinate Zn(2+).

This sequence belongs to the class-II aminoacyl-tRNA synthetase family. As to quaternary structure, homodimer. Zn(2+) is required as a cofactor.

It is found in the cytoplasm. It catalyses the reaction tRNA(Thr) + L-threonine + ATP = L-threonyl-tRNA(Thr) + AMP + diphosphate + H(+). Catalyzes the attachment of threonine to tRNA(Thr) in a two-step reaction: L-threonine is first activated by ATP to form Thr-AMP and then transferred to the acceptor end of tRNA(Thr). Also edits incorrectly charged L-seryl-tRNA(Thr). The polypeptide is Threonine--tRNA ligase (Campylobacter concisus (strain 13826)).